Consider the following 266-residue polypeptide: Heat-inducible transcription repressor HrcA (266 aa).

This sequence belongs to the HrcA family.

In terms of biological role, negative regulator of class I heat shock genes (grpE-dnaK-dnaJ and groELS operons). Prevents heat-shock induction of these operons. In Helicobacter pylori (strain ATCC 700392 / 26695) (Campylobacter pylori), this protein is Heat-inducible transcription repressor HrcA.